A 694-amino-acid polypeptide reads, in one-letter code: Outer dynein arm-docking complex subunit 1 (694 aa).

2 coiled-coil regions span residues 27-192 (ELSR…RYLN) and 222-259 (REEA…HLEQ). The disordered stretch occupies residues 271–290 (RQPDPGVVQKEEQRAWETSE). Residues 339–418 (NFINEQNSEL…EKIKTDIQVL (80 aa)) are a coiled coil. Disordered stretches follow at residues 531–550 (QDEE…TLSS) and 571–694 (SILS…RGYN). Residues S536, S542, S543, and S545 each carry the phosphoserine modification. The segment covering 628 to 642 (TSSSSYLGSTGYLET) has biased composition (low complexity). Positions 655–672 (SQSMGSEMSRGFSSGSGQ) are enriched in polar residues. Residues 673–687 (TSSAAPASRPSSATS) show a composition bias toward low complexity.

The protein belongs to the ODA1/DCC2 family. Component of the outer dynein arm-docking complex along with ODAD2, ODAD3, ODAD4 and CLXN. Interacts with ODAD3. Interacts with ODAD4; this interaction may facilitate the recruitment and/or attachment of outer dynein arm docking complex proteins,including ODAD1, ODAD3, and ODAD4 to ciliary axonemes. Interacts with DNAH9. Interacts with MNS1. Interacts with PIERCE1 and PIERCE2; the interactions link the outer dynein arms docking complex (ODA-DC) to the internal microtubule inner proteins (MIP) in cilium axoneme.

It is found in the cytoplasm. The protein localises to the cytoskeleton. Its subcellular location is the cilium axoneme. Component of the outer dynein arm-docking complex that mediates outer dynein arms (ODA) binding onto the doublet microtubule. Involved in mediating assembly of both ODAs and their axonemal docking complex onto ciliary microtubules. The protein is Outer dynein arm-docking complex subunit 1 (Odad1) of Rattus norvegicus (Rat).